A 207-amino-acid chain; its full sequence is Uracil phosphoribosyltransferase (207 aa).

Residues arginine 77, arginine 102, and 129-137 (DPMLATGGS) each bind 5-phospho-alpha-D-ribose 1-diphosphate. Residues isoleucine 192 and 197–199 (GDA) contribute to the uracil site. Residue aspartate 198 coordinates 5-phospho-alpha-D-ribose 1-diphosphate.

The protein belongs to the UPRTase family. The cofactor is Mg(2+).

The catalysed reaction is UMP + diphosphate = 5-phospho-alpha-D-ribose 1-diphosphate + uracil. It participates in pyrimidine metabolism; UMP biosynthesis via salvage pathway; UMP from uracil: step 1/1. With respect to regulation, allosterically activated by GTP. Catalyzes the conversion of uracil and 5-phospho-alpha-D-ribose 1-diphosphate (PRPP) to UMP and diphosphate. The sequence is that of Uracil phosphoribosyltransferase from Mycoplasma mycoides subsp. mycoides SC (strain CCUG 32753 / NCTC 10114 / PG1).